The sequence spans 360 residues: Phosphoserine aminotransferase (360 aa).

R42 lines the L-glutamate pocket. Residues 76–77 (AS), W102, T152, D172, and Q195 each bind pyridoxal 5'-phosphate. The residue at position 196 (K196) is an N6-(pyridoxal phosphate)lysine. 237-238 (NT) is a binding site for pyridoxal 5'-phosphate.

This sequence belongs to the class-V pyridoxal-phosphate-dependent aminotransferase family. SerC subfamily. In terms of assembly, homodimer. Requires pyridoxal 5'-phosphate as cofactor.

The protein resides in the cytoplasm. The catalysed reaction is O-phospho-L-serine + 2-oxoglutarate = 3-phosphooxypyruvate + L-glutamate. It carries out the reaction 4-(phosphooxy)-L-threonine + 2-oxoglutarate = (R)-3-hydroxy-2-oxo-4-phosphooxybutanoate + L-glutamate. The protein operates within amino-acid biosynthesis; L-serine biosynthesis; L-serine from 3-phospho-D-glycerate: step 2/3. Catalyzes the reversible conversion of 3-phosphohydroxypyruvate to phosphoserine and of 3-hydroxy-2-oxo-4-phosphonooxybutanoate to phosphohydroxythreonine. This chain is Phosphoserine aminotransferase, found in Bacillus cereus (strain ATCC 10987 / NRS 248).